A 110-amino-acid polypeptide reads, in one-letter code: Acylphosphatase (110 aa).

One can recognise an Acylphosphatase-like domain in the interval 20–108 (RAHIFVRGKV…GEFNDFSILP (89 aa)). Catalysis depends on residues Arg-35 and Asn-53.

Belongs to the acylphosphatase family.

It carries out the reaction an acyl phosphate + H2O = a carboxylate + phosphate + H(+). This is Acylphosphatase (acyP) from Pyrobaculum calidifontis (strain DSM 21063 / JCM 11548 / VA1).